We begin with the raw amino-acid sequence, 263 residues long: H-2 class II histocompatibility antigen, A-K beta chain (263 aa).

The N-terminal stretch at 1-27 is a signal peptide; the sequence is MALQIPSLLLLAAVVVLTVLSSPGTEG. The segment at 28–120 is beta-1; it reads GNSERHFVHQ…TETPTSLRRL (93 aa). The Extracellular segment spans residues 28–224; the sequence is GNSERHFVHQ…RAQSESARSK (197 aa). 2 cysteine pairs are disulfide-bonded: Cys-42–Cys-104 and Cys-143–Cys-199. The N-linked (GlcNAc...) asparagine glycan is linked to Asn-46. The interval 121 to 214 is beta-2; the sequence is EQPSVVISLS…SLKSPITVEW (94 aa). The region spanning 123 to 211 is the Ig-like C1-type domain; sequence PSVVISLSRT…EHPSLKSPIT (89 aa). Positions 215-224 are connecting peptide; the sequence is RAQSESARSK. The chain crosses the membrane as a helical span at residues 225-245; that stretch reads MLSGIGGCVLGVIFLGLGLFI. The Cytoplasmic portion of the chain corresponds to 246–263; sequence RHRSQKGPRGPPPAGLLQ.

Belongs to the MHC class II family. Post-translationally, ubiquitinated in immature dendritic cells leading to down-regulation of MHC class II.

Its subcellular location is the membrane. In Mus musculus (Mouse), this protein is H-2 class II histocompatibility antigen, A-K beta chain (H2-Ab1).